The chain runs to 193 residues: Probable nicotinate-nucleotide adenylyltransferase (193 aa).

This sequence belongs to the NadD family.

The catalysed reaction is nicotinate beta-D-ribonucleotide + ATP + H(+) = deamido-NAD(+) + diphosphate. It participates in cofactor biosynthesis; NAD(+) biosynthesis; deamido-NAD(+) from nicotinate D-ribonucleotide: step 1/1. Its function is as follows. Catalyzes the reversible adenylation of nicotinate mononucleotide (NaMN) to nicotinic acid adenine dinucleotide (NaAD). This is Probable nicotinate-nucleotide adenylyltransferase from Endomicrobium trichonymphae.